The primary structure comprises 267 residues: Protein LicA (267 aa).

The protein belongs to the peptidase S49 family.

Functionally, mediates phase variation of the LPS epitopes. Phase variation of H.influenza LPS epitopes expressed by LicA is determined by a translational switch. This Haemophilus influenzae (strain ATCC 51907 / DSM 11121 / KW20 / Rd) protein is Protein LicA (licA).